We begin with the raw amino-acid sequence, 271 residues long: Phosphatidylinositol transfer protein beta isoform (271 aa).

N6-acetyllysine is present on lysine 215. The residue at position 262 (serine 262) is a Phosphoserine.

This sequence belongs to the PtdIns transfer protein family. PI transfer class I subfamily. Post-translationally, constitutive phosphorylation of Ser-262 has no effect on phospholipid transfer activity but is required for Golgi targeting. In terms of tissue distribution, expressed abundantly in brain, kidney, liver, and lung, but in a lesser amount in testis.

Its subcellular location is the golgi apparatus. The protein localises to the golgi apparatus membrane. The protein resides in the endoplasmic reticulum membrane. The catalysed reaction is a 1,2-diacyl-sn-glycero-3-phosphocholine(in) = a 1,2-diacyl-sn-glycero-3-phosphocholine(out). It catalyses the reaction a 1,2-diacyl-sn-glycero-3-phospho-(1D-myo-inositol)(in) = a 1,2-diacyl-sn-glycero-3-phospho-(1D-myo-inositol)(out). It carries out the reaction an N-(acyl)-sphingosylphosphocholine(in) = an N-(acyl)-sphingosylphosphocholine(out). Its activity is regulated as follows. Phosphatidylinositol transfer activity is inhibited by N-ethylmaleimide. Catalyzes the transfer of phosphatidylinositol between membranes. Also catalyzes the transfer of phosphatidylcholine and sphingomyelin between membranes. Required for COPI-mediated retrograde transport from the Golgi to the endoplasmic reticulum; phosphatidylinositol and phosphatidylcholine transfer activity is essential for this function. The chain is Phosphatidylinositol transfer protein beta isoform (Pitpnb) from Rattus norvegicus (Rat).